We begin with the raw amino-acid sequence, 80 residues long: UPF0154 protein SaurJH1_1431 (80 aa).

The chain crosses the membrane as a helical span at residues 4–24 (WLAIIFIVAALILGLIGGFLL).

The protein belongs to the UPF0154 family.

The protein localises to the cell membrane. The chain is UPF0154 protein SaurJH1_1431 from Staphylococcus aureus (strain JH1).